We begin with the raw amino-acid sequence, 207 residues long: Chloramphenicol acetyltransferase (207 aa).

The Proton acceptor role is filled by histidine 186.

Belongs to the chloramphenicol acetyltransferase family. Homotrimer.

The catalysed reaction is chloramphenicol + acetyl-CoA = chloramphenicol 3-acetate + CoA. Functionally, this enzyme is an effector of chloramphenicol resistance in bacteria. This Clostridium perfringens protein is Chloramphenicol acetyltransferase (catP).